Consider the following 388-residue polypeptide: Chorismate synthase (388 aa).

NADP(+) contacts are provided by arginine 39 and arginine 45. Residues arginine 132–serine 134, asparagine 251–alanine 252, glycine 296, lysine 311–threonine 315, and arginine 337 each bind FMN.

The protein belongs to the chorismate synthase family. As to quaternary structure, homotetramer. The cofactor is FMNH2.

The catalysed reaction is 5-O-(1-carboxyvinyl)-3-phosphoshikimate = chorismate + phosphate. The protein operates within metabolic intermediate biosynthesis; chorismate biosynthesis; chorismate from D-erythrose 4-phosphate and phosphoenolpyruvate: step 7/7. Its function is as follows. Catalyzes the anti-1,4-elimination of the C-3 phosphate and the C-6 proR hydrogen from 5-enolpyruvylshikimate-3-phosphate (EPSP) to yield chorismate, which is the branch point compound that serves as the starting substrate for the three terminal pathways of aromatic amino acid biosynthesis. This reaction introduces a second double bond into the aromatic ring system. The protein is Chorismate synthase of Staphylococcus epidermidis (strain ATCC 35984 / DSM 28319 / BCRC 17069 / CCUG 31568 / BM 3577 / RP62A).